A 65-amino-acid chain; its full sequence is UPF0434 protein Rpal_0270 (65 aa).

This sequence belongs to the UPF0434 family.

The sequence is that of UPF0434 protein Rpal_0270 from Rhodopseudomonas palustris (strain TIE-1).